Reading from the N-terminus, the 825-residue chain is MRISLKWLRELVDFQLSPEELGEALTLAGFEVEEIEDRRTWADGVVLGRILAAEPHPNADKLQVCQVDLGSDRPATIVCGAANARPGILVAVATPGTHLPALSLTIAKADKRGVISEGMICSLAELGLEKSSEGIHEFPPDLDLEAHPLGSDVRPLLGLDDVVLDLTSTANRADALSMVGIAREVAALTRNPLRLPPVQPLQAKPIPNFQLRIADAKACPAYSGVLIEGVKVGPSPDWLKHRLAAAGMRSINNVVDITNLILLEWGQPLHAFDWDRLLQVMGKKKPTIEVRLAQPGETLKTLDGQTRTLQADSHLIVAGSQPVALAGVMGGEETEVGSTTTRIFLEAALFDPAVTRRSARSQGLRTEASTRYERGVNFATLDQARDRAVQLILELAGGAVAGLTTFDQRPPLERTLKLRLSRLIDVLGDEVQAADVEEILSALGFQLSRCEGANSQSALSPATETATVASCVWQVVVPPYRLRDIEREIDLIEEFARLYGYDRFSETLPTEPQVGSLSARETFTRQIREVLRGIGLTEVYHISLCPAEEDGSLVRIANPLSPEYSAVRNALLPGLVEAFRFNWDQGNGPLQAFEIGRVFAHALPPNPHPYREAEHIGGILGGDPNPHDWQHRNRPMDWFEAKGLLVSALERLGFGPEFRLDPPEEQSSLLHPGRQASLWIEGSRIGLFGQLHPRLCQEKGLPDQVYGFELQLDPLLESLERRGIVQFVPFSPFPAADRDIAFFAPLDLAVGEIEKVIRRAGGELLQSVQLFDEYRGQGVPAGQRSLAFRLVYRAPDRTLTDAEVEALQNQVRAQLATQFPVTLRS.

One can recognise a tRNA-binding domain in the interval Arg-39–Arg-154. The region spanning Pro-411–Glu-506 is the B5 domain. Residues Asp-484, Asp-490, Glu-493, and Glu-494 each contribute to the Mg(2+) site. Residues Ser-731–Arg-824 form the FDX-ACB domain.

Belongs to the phenylalanyl-tRNA synthetase beta subunit family. Type 1 subfamily. As to quaternary structure, tetramer of two alpha and two beta subunits. Mg(2+) is required as a cofactor.

It localises to the cytoplasm. It carries out the reaction tRNA(Phe) + L-phenylalanine + ATP = L-phenylalanyl-tRNA(Phe) + AMP + diphosphate + H(+). This Synechococcus sp. (strain JA-2-3B'a(2-13)) (Cyanobacteria bacterium Yellowstone B-Prime) protein is Phenylalanine--tRNA ligase beta subunit.